The sequence spans 201 residues: Small ribosomal subunit protein uS10m (201 aa).

Belongs to the universal ribosomal protein uS10 family. As to quaternary structure, component of the mitochondrial small ribosomal subunit (mt-SSU). Mature mammalian 55S mitochondrial ribosomes consist of a small (28S) and a large (39S) subunit. The 28S small subunit contains a 12S ribosomal RNA (12S mt-rRNA) and 30 different proteins. The 39S large subunit contains a 16S rRNA (16S mt-rRNA), a copy of mitochondrial valine transfer RNA (mt-tRNA(Val)), which plays an integral structural role, and 52 different proteins.

It is found in the mitochondrion. This Homo sapiens (Human) protein is Small ribosomal subunit protein uS10m (MRPS10).